A 156-amino-acid chain; its full sequence is Small ribosomal subunit protein uS7 (156 aa).

It belongs to the universal ribosomal protein uS7 family. As to quaternary structure, part of the 30S ribosomal subunit. Contacts proteins S9 and S11.

One of the primary rRNA binding proteins, it binds directly to 16S rRNA where it nucleates assembly of the head domain of the 30S subunit. Is located at the subunit interface close to the decoding center, probably blocks exit of the E-site tRNA. The protein is Small ribosomal subunit protein uS7 of Nitrosomonas europaea (strain ATCC 19718 / CIP 103999 / KCTC 2705 / NBRC 14298).